A 191-amino-acid chain; its full sequence is Calcium-activated potassium channel subunit beta-1 (191 aa).

The Cytoplasmic portion of the chain corresponds to 1–18 (MGKKLVMAQKRGETRALC). The helical transmembrane segment at 19–39 (LGVAMVVCAAITYYVLGTTVL) threads the bilayer. The Extracellular portion of the chain corresponds to 40-155 (PLYQKSVWTQ…VVYQRLYGPQ (116 aa)). N-linked (GlcNAc...) asparagine glycans are attached at residues Asn80 and Asn142. The chain crosses the membrane as a helical span at residues 156–176 (VLLFSFFWPTFLLTGGLLLIA). Residues 177–191 (MVKLNRSLSILAAQK) lie on the Cytoplasmic side of the membrane.

It belongs to the KCNMB (TC 8.A.14.1) family. KCNMB1 subfamily. As to quaternary structure, interacts with KCNMA1 tetramer. There are probably 4 molecules of KCMNB1 per KCNMA1 tetramer. N-glycosylated. As to expression, expressed in many tissues containing smooth muscles. In brain and heart, it is not expressed except in the vasculature, such as cerebral arteries, aorta and corona arteries.

It is found in the membrane. In terms of biological role, regulatory subunit of the calcium activated potassium KCNMA1 (maxiK) channel. Modulates the calcium sensitivity and gating kinetics of KCNMA1, thereby contributing to KCNMA1 channel diversity. Increases the apparent Ca(2+)/voltage sensitivity of the KCNMA1 channel. It also modifies KCNMA1 channel kinetics and alters its pharmacological properties. It slows down the activation and the deactivation kinetics of the channel. Acts as a negative regulator of smooth muscle contraction by enhancing the calcium sensitivity to KCNMA1. Its presence is also a requirement for internal binding of the KCNMA1 channel opener dehydrosoyasaponin I (DHS-1) triterpene glycoside and for external binding of the agonist hormone 17-beta-estradiol (E2). Increases the binding activity of charybdotoxin (CTX) toxin to KCNMA1 peptide blocker by increasing the CTX association rate and decreasing the dissociation rate. The chain is Calcium-activated potassium channel subunit beta-1 (Kcnmb1) from Mus musculus (Mouse).